We begin with the raw amino-acid sequence, 431 residues long: MDSAITLWQFLLQLLQKPQNKHMICWTSNDGQFKLLQAEEVARLWGIRKNKPNMNYDKLSRALRYYYVKNIIKKVNGQKFVYKFVSYPEILNMDPMTVGRIEGDCESLNFSEVSSSSKDVENGGKDKPPQPGAKTSSRNDYIHSGLYSSFTLNSLNSSNVKLFKLIKTENPAEKLAEKKSPQEPTPSVIKFVTTPSKKPPVEPVAATISIGPSISPSSEETIQALETLVSPKLPSLEAPTSASNVMTAFATTPPISSIPPLQEPPRTPSPPLSSHPDIDTDIDSVASQPMELPENLSLEPKDQDSVLLEKDKVNNSSRSKKPKGLELAPTLVITSSDPSPLGILSPSLPTASLTPAFFSQTPIILTPSPLLSSIHFWSTLSPVAPLSPARLQGANTLFQFPSVLNSHGPFTLSGLDGPSTPGPFSPDLQKT.

Residues 5–85 (ITLWQFLLQL…NGQKFVYKFV (81 aa)) constitute a DNA-binding region (ETS). Residues 114–139 (SSSSKDVENGGKDKPPQPGAKTSSRN) are disordered. Positions 118–128 (KDVENGGKDKP) are enriched in basic and acidic residues. K167 participates in a covalent cross-link: Glycyl lysine isopeptide (Lys-Gly) (interchain with G-Cter in SUMO2). At S180 the chain carries Phosphoserine. 3 disordered regions span residues 251 to 282 (TTPP…DTDI), 294 to 323 (ENLS…KKPK), and 411 to 431 (TLSG…LQKT). Residues 261–273 (LQEPPRTPSPPLS) are compositionally biased toward pro residues. The segment covering 299–313 (EPKDQDSVLLEKDKV) has biased composition (basic and acidic residues).

The protein belongs to the ETS family. As to quaternary structure, interacts with SIRT7.

It localises to the nucleus. Functionally, involved in both transcriptional activation and repression. Interaction with SIRT7 leads to recruitment and stabilization of SIRT7 at promoters, followed by deacetylation of histone H3 at 'Lys-18' (H3K18Ac) and subsequent transcription repression. Forms a ternary complex with the serum response factor (SRF). Requires DNA-bound SRF for ternary complex formation and makes extensive DNA contacts to the 5'side of SRF, but does not bind DNA autonomously. This chain is ETS domain-containing protein Elk-4 (ELK4), found in Homo sapiens (Human).